The sequence spans 319 residues: MAKLTVVIPYYQKEPGILRRALASVFAQTLEDFHVLVIDDESPYPIADELAGLAQEERERITVIRQPNGGPGGARNTGLDNVPADSDFVAFLDSDDVWTPDHLLNAYQSMTRFDADCYWASITGGDAFYYHFGVADLEKSETVTRLSESPLVVELPELQDVMLKNWSFLHMSCMVIGRKLFEKVRFEATLKLAAEDVLFFCDCVLASKRVVLCDAAGAVRGEGLNIFHSIDNDSPQFLKQQFNTWVALDTLEGRYRNRPKAMEAIRSYKHTARRQALWSQARRIKRRKLPQFDLLARWLWRDPRLIGSAAELAVGKLSR.

It belongs to the glycosyltransferase 2 family.

It localises to the cell membrane. Its pathway is glycan metabolism; exopolysaccharide biosynthesis. Functionally, glycosyltransferase required for the synthesis of succinoglycan (EPS I). Needed for the addition of the seventh sugar (glucose), catalyzes the formation of a beta-1,3 linkage between the seventh and eighth sugar. The sequence is that of Succinoglycan biosynthesis protein ExoW (exoW) from Rhizobium meliloti (strain 1021) (Ensifer meliloti).